The sequence spans 118 residues: Large ribosomal subunit protein uL18 (118 aa).

This sequence belongs to the universal ribosomal protein uL18 family. As to quaternary structure, part of the 50S ribosomal subunit; part of the 5S rRNA/L5/L18/L25 subcomplex. Contacts the 5S and 23S rRNAs.

Its function is as follows. This is one of the proteins that bind and probably mediate the attachment of the 5S RNA into the large ribosomal subunit, where it forms part of the central protuberance. This chain is Large ribosomal subunit protein uL18, found in Helicobacter pylori (strain P12).